The following is a 762-amino-acid chain: Molybdenum cofactor sulfurase 2 (762 aa).

Lysine 234 bears the N6-(pyridoxal phosphate)lysine mark. Cysteine 400 is a catalytic residue. One can recognise an MOSC domain in the interval 590 to 738; it reads AWISKALRMP…LECGSILEPV (149 aa).

Belongs to the class-V pyridoxal-phosphate-dependent aminotransferase family. MOCOS subfamily. Pyridoxal 5'-phosphate serves as cofactor.

It catalyses the reaction Mo-molybdopterin + L-cysteine + AH2 = thio-Mo-molybdopterin + L-alanine + A + H2O. Sulfurates the molybdenum cofactor. Sulfation of molybdenum is essential for xanthine dehydrogenase (XDH) and aldehyde oxidase (ADO) enzymes in which molybdenum cofactor is liganded by 1 oxygen and 1 sulfur atom in active form. The protein is Molybdenum cofactor sulfurase 2 of Aedes aegypti (Yellowfever mosquito).